The chain runs to 468 residues: UDP-N-acetylmuramate--L-alanine ligase (468 aa).

112–118 contributes to the ATP binding site; sequence GTHGKTT.

It belongs to the MurCDEF family.

Its subcellular location is the cytoplasm. It carries out the reaction UDP-N-acetyl-alpha-D-muramate + L-alanine + ATP = UDP-N-acetyl-alpha-D-muramoyl-L-alanine + ADP + phosphate + H(+). It participates in cell wall biogenesis; peptidoglycan biosynthesis. Cell wall formation. The protein is UDP-N-acetylmuramate--L-alanine ligase of Neisseria meningitidis serogroup C (strain 053442).